The following is a 447-amino-acid chain: DNA primase DnaG (447 aa).

The region spanning 200 to 274 (DSIIVVEGRA…DIDYVARAPE (75 aa)) is the Toprim domain. Mg(2+) is bound by residues Glu-206, Asp-248, and Asp-250.

It belongs to the archaeal DnaG primase family. As to quaternary structure, forms a ternary complex with MCM helicase and DNA. Component of the archaeal exosome complex. It depends on Mg(2+) as a cofactor.

The catalysed reaction is ssDNA + n NTP = ssDNA/pppN(pN)n-1 hybrid + (n-1) diphosphate.. Functionally, RNA polymerase that catalyzes the synthesis of short RNA molecules used as primers for DNA polymerase during DNA replication. Also part of the exosome, which is a complex involved in RNA degradation. Acts as a poly(A)-binding protein that enhances the interaction between heteromeric, adenine-rich transcripts and the exosome. The sequence is that of DNA primase DnaG from Pyrococcus abyssi (strain GE5 / Orsay).